The sequence spans 73 residues: Sodium channel neurotoxin MeuNaTxalpha-13 (73 aa).

An N-terminal signal peptide occupies residues 1 to 5 (TGVES). Residues 7–71 (RDAYIAKPHN…VPIRIPGKCH (65 aa)) form the LCN-type CS-alpha/beta domain. Intrachain disulfides connect Cys17–Cys70, Cys21–Cys43, Cys29–Cys53, and Cys33–Cys55. Positions 72–73 (RR) are cleaved as a propeptide — removed by a carboxypeptidase.

Belongs to the long (4 C-C) scorpion toxin superfamily. Sodium channel inhibitor family. Alpha subfamily. In terms of tissue distribution, expressed by the venom gland.

It localises to the secreted. Functionally, alpha toxins bind voltage-independently at site-3 of sodium channels (Nav) and inhibit the inactivation of the activated channels, thereby blocking neuronal transmission. This chain is Sodium channel neurotoxin MeuNaTxalpha-13, found in Mesobuthus eupeus (Lesser Asian scorpion).